A 237-amino-acid chain; its full sequence is Cytochrome c oxidase subunit 2 (237 aa).

Topologically, residues 1-30 (MNLVAPTPWGLFFQDSATPQMEGIEELHNN) are mitochondrial intermembrane. Residues 31–51 (IMFYLTIILFSVTWMMITIIK) form a helical membrane-spanning segment. At 52–67 (SFVNTKSPISHKYMNH) the chain is on the mitochondrial matrix side. The chain crosses the membrane as a helical span at residues 68-94 (GTLIELIWTITPAVILILIAFPSFKLL). The Mitochondrial intermembrane portion of the chain corresponds to 95-237 (YLMDEVMDPS…SVSLKNFYYD (143 aa)). Residues His176, Cys211, Glu213, Cys215, His219, and Met222 each coordinate Cu cation. Glu213 provides a ligand contact to Mg(2+).

It belongs to the cytochrome c oxidase subunit 2 family. As to quaternary structure, component of the cytochrome c oxidase (complex IV, CIV), a multisubunit enzyme composed of a catalytic core of 3 subunits and several supernumerary subunits. The complex exists as a monomer or a dimer and forms supercomplexes (SCs) in the inner mitochondrial membrane with ubiquinol-cytochrome c oxidoreductase (cytochrome b-c1 complex, complex III, CIII). Cu cation serves as cofactor.

The protein localises to the mitochondrion inner membrane. The enzyme catalyses 4 Fe(II)-[cytochrome c] + O2 + 8 H(+)(in) = 4 Fe(III)-[cytochrome c] + 2 H2O + 4 H(+)(out). Component of the cytochrome c oxidase, the last enzyme in the mitochondrial electron transport chain which drives oxidative phosphorylation. The respiratory chain contains 3 multisubunit complexes succinate dehydrogenase (complex II, CII), ubiquinol-cytochrome c oxidoreductase (cytochrome b-c1 complex, complex III, CIII) and cytochrome c oxidase (complex IV, CIV), that cooperate to transfer electrons derived from NADH and succinate to molecular oxygen, creating an electrochemical gradient over the inner membrane that drives transmembrane transport and the ATP synthase. Cytochrome c oxidase is the component of the respiratory chain that catalyzes the reduction of oxygen to water. Electrons originating from reduced cytochrome c in the intermembrane space (IMS) are transferred via the dinuclear copper A center (CU(A)) of subunit 2 and heme A of subunit 1 to the active site in subunit 1, a binuclear center (BNC) formed by heme A3 and copper B (CU(B)). The BNC reduces molecular oxygen to 2 water molecules using 4 electrons from cytochrome c in the IMS and 4 protons from the mitochondrial matrix. In Trichophyton rubrum (Athlete's foot fungus), this protein is Cytochrome c oxidase subunit 2 (COX2).